The following is a 291-amino-acid chain: U7 snRNA-associated Sm-like protein LSm11 (291 aa).

Residues 55 to 84 (ARGRARGAQRGQSRGPGGKRKGRKPEPDPE) are disordered. The region spanning 124–199 (SPLGELNRCV…LTLTRLFDRL (76 aa)) is the Sm domain. An SM region spans residues 155–289 (GFIVAFDKFW…RGENVLLVHI (135 aa)). The segment at 203–266 (EPGSHDPAKG…RRNRKEKVDY (64 aa)) is disordered. A compositionally biased stretch (basic residues) spans 251 to 261 (NRPKQRRRNRK).

It belongs to the snRNP Sm proteins family. Component of the heptameric ring U7 snRNP complex.

The protein resides in the nucleus. Component of the U7 snRNP complex that is involved in the histone 3'-end pre-mRNA processing. Increases U7 snRNA levels but not histone 3'-end pre-mRNA processing activity, when overexpressed. Binds specifically to the Sm-binding site of U7 snRNA. In Xenopus laevis (African clawed frog), this protein is U7 snRNA-associated Sm-like protein LSm11.